A 346-amino-acid chain; its full sequence is tRNA N6-adenosine threonylcarbamoyltransferase (346 aa).

Fe cation-binding residues include His-111 and His-115. Residues 134–138 (LVSGG), Asp-167, Gly-180, and Asn-279 each bind substrate. Asp-307 contacts Fe cation.

The protein belongs to the KAE1 / TsaD family. It depends on Fe(2+) as a cofactor.

The protein localises to the cytoplasm. The catalysed reaction is L-threonylcarbamoyladenylate + adenosine(37) in tRNA = N(6)-L-threonylcarbamoyladenosine(37) in tRNA + AMP + H(+). Its function is as follows. Required for the formation of a threonylcarbamoyl group on adenosine at position 37 (t(6)A37) in tRNAs that read codons beginning with adenine. Is involved in the transfer of the threonylcarbamoyl moiety of threonylcarbamoyl-AMP (TC-AMP) to the N6 group of A37, together with TsaE and TsaB. TsaD likely plays a direct catalytic role in this reaction. The chain is tRNA N6-adenosine threonylcarbamoyltransferase from Burkholderia pseudomallei (strain K96243).